A 235-amino-acid polypeptide reads, in one-letter code: Post-translational flagellin modification protein B (235 aa).

The protein belongs to the CMP-NeuNAc synthase family.

In terms of biological role, required for biosynthesis of LAH modification in the post-translational modification of Campylobacter coli flagellin. The polypeptide is Post-translational flagellin modification protein B (ptmB) (Campylobacter coli).